A 479-amino-acid chain; its full sequence is M-phase inducer phosphatase (479 aa).

Positions 182–218 are disordered; that stretch reads MTESNTNSTTTPPPKTPETARDCFKRPEPPASANCSP. Basic and acidic residues predominate over residues 199 to 209; sequence ETARDCFKRPE. Residues 316–432 enclose the Rhodanese domain; it reads KVASYRIIDC…FFESHVELCE (117 aa). Cysteine 379 is a catalytic residue. Serine 455 carries the post-translational modification Phosphoserine.

This sequence belongs to the MPI phosphatase family.

It carries out the reaction O-phospho-L-tyrosyl-[protein] + H2O = L-tyrosyl-[protein] + phosphate. This protein functions as a dosage-dependent inducer in mitotic control. It is a tyrosine protein phosphatase required for progression of the cell cycle. It may directly dephosphorylate Cdk1 and activate the Cdk1 activity. The sequence is that of M-phase inducer phosphatase (stg) from Drosophila melanogaster (Fruit fly).